Reading from the N-terminus, the 137-residue chain is Protein PsiE homolog (137 aa).

Helical transmembrane passes span 13-35 (ILLR…AFLI), 55-77 (YYMT…IVKY), 84-103 (FPLR…FIIV), and 107-129 (SATS…FLAN).

The protein belongs to the PsiE family.

It localises to the cell membrane. The chain is Protein PsiE homolog from Listeria monocytogenes serotype 4b (strain F2365).